Here is a 484-residue protein sequence, read N- to C-terminus: Putative tyramine receptor 2 (484 aa).

Residues Met-1 to Thr-54 lie on the Extracellular side of the membrane. Asn-13 is a glycosylation site (N-linked (GlcNAc...) asparagine). Residues Ala-55–Phe-77 traverse the membrane as a helical segment. The Cytoplasmic portion of the chain corresponds to Thr-78–Asn-87. A helical transmembrane segment spans residues Phe-88–Val-109. Topologically, residues Ala-110 to Met-126 are extracellular. Cys-124 and Cys-203 are joined by a disulfide. The chain crosses the membrane as a helical span at residues Trp-127–Leu-147. Residues Asp-148–Arg-167 lie on the Cytoplasmic side of the membrane. The helical transmembrane segment at Val-168–Trp-190 threads the bilayer. The Extracellular portion of the chain corresponds to Asn-191 to Ser-215. Residue Asn-198 is glycosylated (N-linked (GlcNAc...) asparagine). Residues Ser-216–Ala-237 traverse the membrane as a helical segment. Residues Thr-238–Thr-411 lie on the Cytoplasmic side of the membrane. The span at Ser-253–Thr-280 shows a compositional bias: polar residues. Disordered regions lie at residues Ser-253–Val-322 and Thr-350–Val-383. Residues Glu-295–Lys-306 are compositionally biased toward basic residues. A compositionally biased stretch (low complexity) spans Thr-350 to Thr-360. The segment covering Ala-361–Ala-378 has biased composition (polar residues). Residues Leu-412 to Val-433 traverse the membrane as a helical segment. At Pro-434 to Asn-448 the chain is on the extracellular side. A helical membrane pass occupies residues Phe-449–Leu-470. Residues Asp-471–Thr-484 are Cytoplasmic-facing.

This sequence belongs to the G-protein coupled receptor 1 family.

It is found in the cell membrane. In terms of biological role, G-protein coupled receptor for tyramine, a known neurotransmitter and neuromodulator and direct precursor of octopamine. This Locusta migratoria (Migratory locust) protein is Putative tyramine receptor 2 (GCR2).